The primary structure comprises 39 residues: MTIDKTYPIFTVRWLTVHGLAVPTVSFLGSISAMQFIQR.

A helical transmembrane segment spans residues 14-30 (WLTVHGLAVPTVSFLGS). H18 is a binding site for heme.

It belongs to the PsbE/PsbF family. Heterodimer of an alpha subunit and a beta subunit. PSII is composed of 1 copy each of membrane proteins PsbA, PsbB, PsbC, PsbD, PsbE, PsbF, PsbH, PsbI, PsbJ, PsbK, PsbL, PsbM, PsbT, PsbX, PsbY, PsbZ, Psb30/Ycf12, at least 3 peripheral proteins of the oxygen-evolving complex and a large number of cofactors. It forms dimeric complexes. The cofactor is heme b.

It is found in the plastid. The protein localises to the chloroplast thylakoid membrane. Functionally, this b-type cytochrome is tightly associated with the reaction center of photosystem II (PSII). PSII is a light-driven water:plastoquinone oxidoreductase that uses light energy to abstract electrons from H(2)O, generating O(2) and a proton gradient subsequently used for ATP formation. It consists of a core antenna complex that captures photons, and an electron transfer chain that converts photonic excitation into a charge separation. The chain is Cytochrome b559 subunit beta from Cucumis sativus (Cucumber).